Reading from the N-terminus, the 778-residue chain is Arf-GAP with coiled-coil, ANK repeat and PH domain-containing protein 2 (778 aa).

One can recognise a BAR domain in the interval 1–226 (MKMTVDFEEC…MKDLGAQLDR (226 aa)). The region spanning 266 to 361 (GIVMEGYLFK…WIKAVQTSIA (96 aa)) is the PH domain. The disordered stretch occupies residues 371–391 (SEKLDKKSSPSTGSLDSGNES). Residues 379–388 (SPSTGSLDSG) are compositionally biased toward polar residues. Phosphoserine occurs at positions 384 and 387. Residues 399-520 (ESALQRVQCV…KFVDKYSVSS (122 aa)) enclose the Arf-GAP domain. Residues 414–437 (CCDCGLADPRWASINLGITLCIEC) form a C4-type zinc finger. A disordered region spans residues 518–596 (VSSSPPEQEK…EPEGERQDSS (79 aa)). Position 521 is a phosphoserine (S521). Positions 524–539 (EQEKKVVSKDSEEKRL) are enriched in basic and acidic residues. Polar residues predominate over residues 550-569 (VRTSIQSSVKSNDSGIQQSS). 2 positions are modified to phosphoserine: S581 and S584. 3 ANK repeats span residues 640-669 (NKATPLIQAVLGGSLVTCEFLLQNGANVNQ), 673-702 (QGRGPLHHATVLGHTGQVCLFLKRGANQHA), and 706-735 (EGKDPLSIAVEAANADIVTLLRLARMNEEM). Y742 is subject to Phosphotyrosine. S775 carries the post-translational modification Phosphoserine.

Interacts with RAB35 (GTP-bound form); the interaction is direct and probably recruits ACAP2 to membranes. Interacts with MICALL1; the interaction is indirect through RAB35.

Its subcellular location is the endosome membrane. It is found in the cell membrane. Its activity is regulated as follows. GAP activity stimulated by phosphatidylinositol 4,5-bisphosphate (PIP2) and phosphatidic acid. Its function is as follows. GTPase-activating protein (GAP) for ADP ribosylation factor 6 (ARF6). Doesn't show GAP activity for RAB35. The sequence is that of Arf-GAP with coiled-coil, ANK repeat and PH domain-containing protein 2 (ACAP2) from Oryctolagus cuniculus (Rabbit).